A 342-amino-acid polypeptide reads, in one-letter code: UDP-3-O-acylglucosamine N-acyltransferase (342 aa).

H238 (proton acceptor) is an active-site residue.

The protein belongs to the transferase hexapeptide repeat family. LpxD subfamily. In terms of assembly, homotrimer.

It carries out the reaction a UDP-3-O-[(3R)-3-hydroxyacyl]-alpha-D-glucosamine + a (3R)-hydroxyacyl-[ACP] = a UDP-2-N,3-O-bis[(3R)-3-hydroxyacyl]-alpha-D-glucosamine + holo-[ACP] + H(+). It functions in the pathway bacterial outer membrane biogenesis; LPS lipid A biosynthesis. Catalyzes the N-acylation of UDP-3-O-acylglucosamine using 3-hydroxyacyl-ACP as the acyl donor. Is involved in the biosynthesis of lipid A, a phosphorylated glycolipid that anchors the lipopolysaccharide to the outer membrane of the cell. This chain is UDP-3-O-acylglucosamine N-acyltransferase, found in Tolumonas auensis (strain DSM 9187 / NBRC 110442 / TA 4).